The chain runs to 149 residues: Calmodulin (149 aa).

Ala-2 carries the N-acetylalanine modification. EF-hand domains lie at 8-43, 44-79, 81-116, and 117-149; these read EQIA…LGQN, PTEA…KMKD, DSEE…LGEK, and LTDE…MTSK. The Ca(2+) site is built by Asp-21, Asp-23, Asp-25, Thr-27, Glu-32, Asp-57, Asp-59, Asp-61, Thr-63, Glu-68, Asp-94, Asp-96, Asn-98, and Glu-105. Lys-116 carries the post-translational modification N6,N6,N6-trimethyllysine. Asp-130, Asp-132, Asp-134, Gln-136, and Glu-141 together coordinate Ca(2+).

The protein belongs to the calmodulin family.

Its function is as follows. Calmodulin mediates the control of a large number of enzymes, ion channels and other proteins by Ca(2+). Among the enzymes to be stimulated by the calmodulin-Ca(2+) complex are a number of protein kinases and phosphatases. This Pyuridae sp. (Sea squirt) protein is Calmodulin.